The following is a 181-amino-acid chain: UPF0340 protein OB2986 (181 aa).

It belongs to the UPF0340 family.

The chain is UPF0340 protein OB2986 from Oceanobacillus iheyensis (strain DSM 14371 / CIP 107618 / JCM 11309 / KCTC 3954 / HTE831).